The primary structure comprises 129 residues: Glycine cleavage system H protein (129 aa).

In terms of domain architecture, Lipoyl-binding spans 24–106 (IATIGITEFA…YGEGWFLKVR (83 aa)). Lys-65 is subject to N6-lipoyllysine.

The protein belongs to the GcvH family. In terms of assembly, the glycine cleavage system is composed of four proteins: P, T, L and H. The cofactor is (R)-lipoate.

Its function is as follows. The glycine cleavage system catalyzes the degradation of glycine. The H protein shuttles the methylamine group of glycine from the P protein to the T protein. This Nostoc punctiforme (strain ATCC 29133 / PCC 73102) protein is Glycine cleavage system H protein.